A 367-amino-acid chain; its full sequence is Protein pxr1 (367 aa).

Disordered regions lie at residues 1–28 (MGLSAPKNKIKLSHDPNNTKWSGNTDSF) and 156–336 (KALK…PMGI). Residues 15–27 (DPNNTKWSGNTDS) are compositionally biased toward polar residues. Residues 25-79 (TDSFGHRMMKSQGWTPGEYLGAKDAAHAEFHTAANASHIRVVIKDNNLGLGAKIG) enclose the G-patch domain. A compositionally biased stretch (acidic residues) spans 167-182 (SSDDSDSSSDEEEEEK). Basic residues-rich tracts occupy residues 209–221 (SKKSKKDKKSKKR), 236–248 (KSKKSKKDRKSKS), and 265–277 (KARKKEKKEKKRR). A compositionally biased stretch (low complexity) spans 282–296 (ATAGADTEETSSTSK). The segment covering 297-309 (SSKKNSKKDKHKS) has biased composition (basic residues). Residues 310 to 328 (SSASESSTKESTPTVTESS) are compositionally biased toward low complexity.

This sequence belongs to the PINX1 family.

It localises to the nucleus. It is found in the nucleolus. Its function is as follows. Involved in rRNA-processing at A0, A1 and A2 sites and negatively regulates telomerase. In Sclerotinia sclerotiorum (strain ATCC 18683 / 1980 / Ss-1) (White mold), this protein is Protein pxr1 (pxr1).